We begin with the raw amino-acid sequence, 133 residues long: ATP synthase epsilon chain (133 aa).

It belongs to the ATPase epsilon chain family. F-type ATPases have 2 components, CF(1) - the catalytic core - and CF(0) - the membrane proton channel. CF(1) has five subunits: alpha(3), beta(3), gamma(1), delta(1), epsilon(1). CF(0) has three main subunits: a, b and c.

The protein localises to the cell membrane. Its function is as follows. Produces ATP from ADP in the presence of a proton gradient across the membrane. The protein is ATP synthase epsilon chain of Bacillus cytotoxicus (strain DSM 22905 / CIP 110041 / 391-98 / NVH 391-98).